The primary structure comprises 472 residues: 2-amino-4-ketopentanoate thiolase beta subunit (472 aa).

Lys-102 carries the post-translational modification N6-(pyridoxal phosphate)lysine. Pyridoxal 5'-phosphate is bound by residues Asn-128 and 238-242 (AGGGN).

It belongs to the threonine synthase family. In terms of assembly, heterodimer with OrtA. Pyridoxal 5'-phosphate serves as cofactor.

The enzyme catalyses D-alanine + acetyl-CoA = (2R)-2-amino-4-oxopentanoate + CoA. Involved in the ornithine fermentation pathway. Catalyzes the thiolytic cleavage of 2-amino-4-ketopentanoate (AKP) with coenzyme A (CoA) to form acetyl-CoA and alanine. It is strictly specific for AKP. In Unknown prokaryotic organism, this protein is 2-amino-4-ketopentanoate thiolase beta subunit.